A 66-amino-acid chain; its full sequence is Toxin Cll1 (66 aa).

Residues 1–66 (KEGYLVNKST…TYPLPNKSCS (66 aa)) enclose the LCN-type CS-alpha/beta domain. Disulfide bonds link C12–C65, C16–C41, C25–C46, and C29–C48.

This sequence belongs to the long (4 C-C) scorpion toxin superfamily. Sodium channel inhibitor family. Beta subfamily. Expressed by the venom gland.

It localises to the secreted. Its function is as follows. Beta toxin that binds site-4 of sodium channels (Nav) and reduces peak current (observed on Nav1.1/SCN1A, Nav1.2/SCN2A, Nav1.3/SCN3A, Nav1.4/SCN5A, Nav1.5/SCN4A, and Nav1.6/SCN8A (IC(50)=44.9 nM)), shifts the voltage of activation toward more negative potentials (observed on Nav1.6, Nav1.1 (weak), Nav1.2 (weak), and Nav1.7 (weak)), and induces resurgent currents at negative voltages following brief and strong depolarizations (observed on Nav1.6, Nav1.1 (weak), Nav1.2 (weak), and Nav1.4 (weak)). This toxin is only active on crustaceans. The sequence is that of Toxin Cll1 from Centruroides limpidus (Mexican scorpion).